The primary structure comprises 141 residues: MRQRTIVCPLIQNDGCYLLCKMADNRGVFPGQWALSGGGVEPGERIEEALRREIREELGEQLILSDITPWTFRDDIRVKTYADGRQEEIYMIYLIFDCVSANRDICINDEFQDYAWVRPEEFALYDLNVATRHTLRLKGLL.

Positions 1-141 (MRQRTIVCPL…RHTLRLKGLL (141 aa)) constitute a Nudix hydrolase domain. The Nudix box signature appears at 38-59 (GGVEPGERIEEALRREIREELG).

This sequence belongs to the Nudix hydrolase family. NudI subfamily. Monomer. Requires Mg(2+) as cofactor.

The catalysed reaction is a ribonucleoside 5'-triphosphate + H2O = a ribonucleoside 5'-phosphate + diphosphate + H(+). The enzyme catalyses a 2'-deoxyribonucleoside 5'-triphosphate + H2O = a 2'-deoxyribonucleoside 5'-phosphate + diphosphate + H(+). It catalyses the reaction dUTP + H2O = dUMP + diphosphate + H(+). It carries out the reaction dTTP + H2O = dTMP + diphosphate + H(+). The catalysed reaction is dCTP + H2O = dCMP + diphosphate + H(+). Catalyzes the hydrolysis of nucleoside triphosphates, with a preference for pyrimidine deoxynucleoside triphosphates (dUTP, dTTP and dCTP). The polypeptide is Nucleoside triphosphatase NudI (Salmonella arizonae (strain ATCC BAA-731 / CDC346-86 / RSK2980)).